The sequence spans 268 residues: 4-diphosphocytidyl-2-C-methyl-D-erythritol kinase (268 aa).

K10 is an active-site residue. 101–111 serves as a coordination point for ATP; that stretch reads PTQAGLGGGST. D143 is an active-site residue.

It belongs to the GHMP kinase family. IspE subfamily.

It carries out the reaction 4-CDP-2-C-methyl-D-erythritol + ATP = 4-CDP-2-C-methyl-D-erythritol 2-phosphate + ADP + H(+). The protein operates within isoprenoid biosynthesis; isopentenyl diphosphate biosynthesis via DXP pathway; isopentenyl diphosphate from 1-deoxy-D-xylulose 5-phosphate: step 3/6. Functionally, catalyzes the phosphorylation of the position 2 hydroxy group of 4-diphosphocytidyl-2C-methyl-D-erythritol. This chain is 4-diphosphocytidyl-2-C-methyl-D-erythritol kinase, found in Helicobacter pylori (strain ATCC 700392 / 26695) (Campylobacter pylori).